A 500-amino-acid polypeptide reads, in one-letter code: Probable cytosol aminopeptidase (500 aa).

2 residues coordinate Mn(2+): K265 and D270. The active site involves K277. Residues D288, D347, and E349 each contribute to the Mn(2+) site. Residue R351 is part of the active site.

The protein belongs to the peptidase M17 family. Requires Mn(2+) as cofactor.

Its subcellular location is the cytoplasm. The catalysed reaction is Release of an N-terminal amino acid, Xaa-|-Yaa-, in which Xaa is preferably Leu, but may be other amino acids including Pro although not Arg or Lys, and Yaa may be Pro. Amino acid amides and methyl esters are also readily hydrolyzed, but rates on arylamides are exceedingly low.. It carries out the reaction Release of an N-terminal amino acid, preferentially leucine, but not glutamic or aspartic acids.. Its function is as follows. Presumably involved in the processing and regular turnover of intracellular proteins. Catalyzes the removal of unsubstituted N-terminal amino acids from various peptides. The polypeptide is Probable cytosol aminopeptidase (Bdellovibrio bacteriovorus (strain ATCC 15356 / DSM 50701 / NCIMB 9529 / HD100)).